Here is a 123-residue protein sequence, read N- to C-terminus: MPTVNQLVRLGRKPQKKKTNVPALQACPQRRGVCTRVYTTTPKKPNSALRKVARVRLTNGHEVSAYIPGEGHNLQEHSVVLIRGGRVKDLPGVRYHILRGSLDTQGVKDRKQGRSKYGAKRPK.

At D89 the chain carries 3-methylthioaspartic acid. Residues 102–123 (LDTQGVKDRKQGRSKYGAKRPK) form a disordered region. Residues 113–123 (GRSKYGAKRPK) are compositionally biased toward basic residues.

The protein belongs to the universal ribosomal protein uS12 family. As to quaternary structure, part of the 30S ribosomal subunit. Contacts proteins S8 and S17. May interact with IF1 in the 30S initiation complex.

With S4 and S5 plays an important role in translational accuracy. Functionally, interacts with and stabilizes bases of the 16S rRNA that are involved in tRNA selection in the A site and with the mRNA backbone. Located at the interface of the 30S and 50S subunits, it traverses the body of the 30S subunit contacting proteins on the other side and probably holding the rRNA structure together. The combined cluster of proteins S8, S12 and S17 appears to hold together the shoulder and platform of the 30S subunit. This chain is Small ribosomal subunit protein uS12, found in Magnetococcus marinus (strain ATCC BAA-1437 / JCM 17883 / MC-1).